We begin with the raw amino-acid sequence, 171 residues long: Co-chaperone protein HscB (171 aa).

In terms of domain architecture, J spans 2–74 (DYFTLFGLPA…LTRAEYLLSL (73 aa)).

It belongs to the HscB family. As to quaternary structure, interacts with HscA and stimulates its ATPase activity. Interacts with IscU.

Co-chaperone involved in the maturation of iron-sulfur cluster-containing proteins. Seems to help targeting proteins to be folded toward HscA. This is Co-chaperone protein HscB from Klebsiella pneumoniae (strain 342).